We begin with the raw amino-acid sequence, 295 residues long: Aspartate carbamoyltransferase catalytic subunit (295 aa).

Carbamoyl phosphate-binding residues include Arg-49 and Thr-50. An L-aspartate-binding site is contributed by Lys-77. 3 residues coordinate carbamoyl phosphate: Arg-99, His-127, and Gln-130. The L-aspartate site is built by Arg-161 and Arg-212. Carbamoyl phosphate-binding residues include Gly-251 and Pro-252.

The protein belongs to the aspartate/ornithine carbamoyltransferase superfamily. ATCase family. Heterododecamer (2C3:3R2) of six catalytic PyrB chains organized as two trimers (C3), and six regulatory PyrI chains organized as three dimers (R2).

The catalysed reaction is carbamoyl phosphate + L-aspartate = N-carbamoyl-L-aspartate + phosphate + H(+). It participates in pyrimidine metabolism; UMP biosynthesis via de novo pathway; (S)-dihydroorotate from bicarbonate: step 2/3. Its function is as follows. Catalyzes the condensation of carbamoyl phosphate and aspartate to form carbamoyl aspartate and inorganic phosphate, the committed step in the de novo pyrimidine nucleotide biosynthesis pathway. The protein is Aspartate carbamoyltransferase catalytic subunit of Campylobacter jejuni (strain RM1221).